The primary structure comprises 94 residues: MFTINAEVRKEQGKGASRRLRAANKFPAIIYGGEAAPVAIELDHDKLWNMQDKAEFYGEVVTLVIDGKEEKVKVQAVQRHAFKPKLTHIDFVRA.

The protein belongs to the bacterial ribosomal protein bL25 family. As to quaternary structure, part of the 50S ribosomal subunit; part of the 5S rRNA/L5/L18/L25 subcomplex. Contacts the 5S rRNA. Binds to the 5S rRNA independently of L5 and L18.

Its function is as follows. This is one of the proteins that binds to the 5S RNA in the ribosome where it forms part of the central protuberance. The sequence is that of Large ribosomal subunit protein bL25 from Klebsiella pneumoniae (strain 342).